Reading from the N-terminus, the 252-residue chain is F-box/SPRY domain-containing protein 1 (252 aa).

Residues 1-48 (MVDPLCNYNVLEAIFSYLELSDLSRCSQVCKSWYHFLNDENSDVWRWH) form the F-box domain. Residues 58 to 250 (IKSDLLASVT…VSMVYLGTPL (193 aa)) form the B30.2/SPRY domain.

It belongs to the FBXO45/Fsn family. In terms of assembly, component of an E3 ubiquitin ligase complex composed of hiw and Fsn.

Its subcellular location is the synapse. It participates in protein modification; protein ubiquitination. In terms of biological role, required in the presynaptic motoneuron to down-regulate the levels of wnd and restrain synaptic terminal growth at the neuromuscular junction (NMJ). This is F-box/SPRY domain-containing protein 1 from Drosophila mojavensis (Fruit fly).